Consider the following 117-residue polypeptide: Alpha-endosulfine (117 aa).

Residues 1–53 (MAAPLGTGARAEDSGQEKQDSQEKETVIPERAEEAKLKAKYPNLGQKPGGSDF) are disordered. The span at 10 to 37 (RAEDSGQEKQDSQEKETVIPERAEEAKL) shows a compositional bias: basic and acidic residues. A Phosphoserine; by GWL modification is found at Ser-67. Positions 76–117 (KMKNKQLPTAGPDKNLVTGDHIPKPQDLPQRKSSLVASKLAG) are disordered.

This sequence belongs to the endosulfine family. Phosphorylation at Ser-67 by GWL during mitosis is essential for interaction with PPP2R2D (PR55-delta) and subsequent inactivation of PP2A.

It is found in the cytoplasm. In terms of biological role, protein phosphatase inhibitor that specifically inhibits protein phosphatase 2A (PP2A) during mitosis. When phosphorylated at Ser-67 during mitosis, specifically interacts with PPP2R2D (PR55-delta) and inhibits its activity, leading to inactivation of PP2A, an essential condition to keep cyclin-B1-CDK1 activity high during M phase. The chain is Alpha-endosulfine (ENSA) from Gallus gallus (Chicken).